A 333-amino-acid chain; its full sequence is Ribosome biogenesis regulatory protein homolog (333 aa).

2 disordered regions span residues 227 to 248 and 271 to 333; these read KANV…VSGE and AAAV…ARKG. The span at 278–295 shows a compositional bias: basic and acidic residues; it reads LREKKEKSERKGAKDQTR. Basic residues predominate over residues 324-333; sequence GANKAKARKG.

This sequence belongs to the RRS1 family.

The protein resides in the nucleus. It is found in the nucleolus. In terms of biological role, involved in ribosomal large subunit assembly. The protein is Ribosome biogenesis regulatory protein homolog of Caenorhabditis elegans.